Reading from the N-terminus, the 613-residue chain is Chitin synthase 8 (613 aa).

The tract at residues 1–73 (MAVSPTAKRK…PAPLTRPPPP (73 aa)) is disordered. A glycan (N-linked (GlcNAc...) asparagine) is linked at asparagine 17. Residues 18-27 (LSRQSSSART) show a composition bias toward polar residues. Positions 61–73 (ESPPAPLTRPPPP) are enriched in pro residues. 2 helical membrane-spanning segments follow: residues 119 to 139 (YSLI…LWNY) and 142 to 162 (YWYI…IFAI). N-linked (GlcNAc...) asparagine glycans are attached at residues asparagine 312, asparagine 421, and asparagine 471. 2 helical membrane-spanning segments follow: residues 556 to 576 (VTTW…AIAL) and 583 to 602 (IFEN…RYAA).

This sequence belongs to the chitin synthase family.

It localises to the cell membrane. The enzyme catalyses [(1-&gt;4)-N-acetyl-beta-D-glucosaminyl](n) + UDP-N-acetyl-alpha-D-glucosamine = [(1-&gt;4)-N-acetyl-beta-D-glucosaminyl](n+1) + UDP + H(+). Functionally, polymerizes chitin, a structural polymer of the cell wall and septum, by transferring the sugar moiety of UDP-GlcNAc to the non-reducing end of the growing chitin polymer. Plays a role in cell wall integrity. Plays a key role in pathogenicity. Likely contributes to post-penetration virulence. The chain is Chitin synthase 8 from Verticillium dahliae (strain VdLs.17 / ATCC MYA-4575 / FGSC 10137) (Verticillium wilt).